We begin with the raw amino-acid sequence, 932 residues long: Protein translocase subunit SecA (932 aa).

ATP contacts are provided by residues glutamine 90, 108–112 (GEGKT), and aspartate 498.

The protein belongs to the SecA family. In terms of assembly, monomer and homodimer. Part of the essential Sec protein translocation apparatus which comprises SecA, SecYEG and auxiliary proteins SecDF. Other proteins may also be involved.

Its subcellular location is the cell inner membrane. It is found in the cellular thylakoid membrane. The protein resides in the cytoplasm. It carries out the reaction ATP + H2O + cellular proteinSide 1 = ADP + phosphate + cellular proteinSide 2.. Functionally, part of the Sec protein translocase complex. Interacts with the SecYEG preprotein conducting channel. Has a central role in coupling the hydrolysis of ATP to the transfer of proteins into and across the cell membrane, serving as an ATP-driven molecular motor driving the stepwise translocation of polypeptide chains across the membrane. Its function is as follows. Probably participates in protein translocation into and across both the cytoplasmic and thylakoid membranes in cyanobacterial cells. The polypeptide is Protein translocase subunit SecA (Synechocystis sp. (strain ATCC 27184 / PCC 6803 / Kazusa)).